Here is a 272-residue protein sequence, read N- to C-terminus: SWIRM domain-containing protein laf2 (272 aa).

A disordered region spans residues 86-148 (HVGRWANRHS…RRRKSARGNG (63 aa)). 2 stretches are compositionally biased toward low complexity: residues 95–120 (SNVSSSSGSRGRSSVSSRDSSPSYSG) and 127–136 (RSISSSPSTI). Residues Ser-130 and Ser-132 each carry the phosphoserine modification. Thr-135 is modified (phosphothreonine). Residues 182–272 (LKAEWKGPPL…AFHEVGFFDD (91 aa)) enclose the SWIRM domain.

As to quaternary structure, component of the RPD3C(L) complex.

Its subcellular location is the nucleus. In terms of biological role, component of the RPD3C(L) histone deacetylase complex (HDAC) responsible for the deacetylation of lysine residues on the N-terminal part of the core histones (H2A, H2B, H3 and H4). Histone deacetylation gives a tag for epigenetic repression and plays an important role in transcriptional regulation, cell cycle progression and developmental events. In Schizosaccharomyces pombe (strain 972 / ATCC 24843) (Fission yeast), this protein is SWIRM domain-containing protein laf2 (laf2).